Consider the following 209-residue polypeptide: MSKQKHSASSTRWLKEHFDDKYVNEAKKKGYRSRAIFKIEEIQNKDKLLKAGMTVVDLGAAPGGWSQFAAKVVGEGGRVIACDLLPMESIAGVSFLQGDFREEAVLNALLDRIQPDMVDVVMSDMAPNMAGNLSVDQPRAMYLVELALDMCRQVLAPNGSFVVKVFQGEGFDDYVKAVRDLFKVVKIRKPDSSRSRSREVFIVATGYKG.

S-adenosyl-L-methionine is bound by residues glycine 63, tryptophan 65, aspartate 83, aspartate 99, and aspartate 124. The active-site Proton acceptor is the lysine 164.

Belongs to the class I-like SAM-binding methyltransferase superfamily. RNA methyltransferase RlmE family.

Its subcellular location is the cytoplasm. The enzyme catalyses uridine(2552) in 23S rRNA + S-adenosyl-L-methionine = 2'-O-methyluridine(2552) in 23S rRNA + S-adenosyl-L-homocysteine + H(+). Specifically methylates the uridine in position 2552 of 23S rRNA at the 2'-O position of the ribose in the fully assembled 50S ribosomal subunit. The polypeptide is Ribosomal RNA large subunit methyltransferase E (Vibrio cholerae serotype O1 (strain ATCC 39541 / Classical Ogawa 395 / O395)).